The sequence spans 149 residues: Large ribosomal subunit protein uL15 (149 aa).

Positions 21 to 54 (RGSASGLGCTSGKGNKGQNARSGGGVRPGFEGGQ) are disordered. 2 stretches are compositionally biased toward gly residues: residues 23–35 (SASG…GKGN) and 42–52 (SGGGVRPGFEG).

Belongs to the universal ribosomal protein uL15 family. Part of the 50S ribosomal subunit.

In terms of biological role, binds to the 23S rRNA. The protein is Large ribosomal subunit protein uL15 of Lawsonia intracellularis (strain PHE/MN1-00).